The following is a 532-amino-acid chain: Omega-hydroxyceramide transacylase (532 aa).

Residues 16–185 (ISFSGSGFLS…TGMQPCAFWT (170 aa)) form the PNPLA domain. Positions 51-55 (GTSAG) match the GXSXG motif. The Nucleophile role is filled by Ser53. The active-site Proton acceptor is the Asp172. The DGA/G signature appears at 172-174 (DGG). 2 disordered regions span residues 290–457 (PERS…ELGQ) and 489–532 (VTES…SKVQ). Positions 310 to 322 (PHKEWVPKGDGRG) are enriched in basic and acidic residues. Composition is skewed to low complexity over residues 380-389 (PPSSTPGSSL) and 397-411 (SPLSPQQQVQPSGSP). The span at 517-532 (GFPRHSGSKKPSSKVQ) shows a compositional bias: basic residues.

As to expression, expressed in the digestive system. Expressed in the epidermis of skin keratinocytes. Strongly expressed in the granular layer. Expressed in the upper epidermis and eccrine sweat glands of the dermis and in the region of keratin filament bundles, which is more pronounced in upper epidermal layers and in the lower cornified layers.

Its subcellular location is the cytoplasm. It catalyses the reaction an N-(omega-hydroxy-ultra-long chain fatty acyl)-sphingoid base + a (9Z,12Z)-octadecadienoyl-containing triacyl-sn-glycerol = an N-[omega-(9Z,12Z-octadecadienoyloxy)-O-ultra-long chain fatty acyl]-sphingoid base + a diacylglycerol. The catalysed reaction is an N-(omega-hydroxy-ultra-long chain fatty acyl)-sphing-4-enine + a (9Z,12Z)-octadecadienoyl-containing triacyl-sn-glycerol = an N-(omega-(9Z,12Z-octadecadienoyloxy)-ultra-long chain fatty acyl)-sphing-4-enine + a diacylglycerol. The enzyme catalyses N-(30-hydroxytriacontanoyl)-sphing-4-enine + 1,2,3-tri-(9Z,12Z)-octadecadienoylglycerol = N-[30-(9Z,12Z-octadecadienoyloxy)-triacontanoyl]-sphing-4-enine + di-(9Z,12Z)-octadecadienoylglycerol. It carries out the reaction N-(28-hydroxyoctacosanoyl)-sphing-4-enine + a (9Z,12Z)-octadecadienoyl-containing triacyl-sn-glycerol = N-(28-(9Z,12Z-octadecadienoyloxy)-octacosanoyl)-sphing-4-enine + a diacylglycerol. It catalyses the reaction N-(32-hydroxydotriacontanoyl)-sphing-4-enine + a (9Z,12Z)-octadecadienoyl-containing triacyl-sn-glycerol = N-(32-(9Z,12Z-octadecadienoyloxy)-dotricontanoyl)-sphing-4-enine + a diacylglycerol. The catalysed reaction is N-(32-hydroxydotriacontenoyl)-sphing-4-enine + a (9Z,12Z)-octadecadienoyl-containing triacyl-sn-glycerol = an N-(32-(9Z,12Z-octadecadienoyloxy)-dotriacontenoyl)-sphing-4-enine + a diacylglycerol. The enzyme catalyses an N-(34-hydroxytetratriacontenoyl)-sphing-4-enine + a (9Z,12Z)-octadecadienoyl-containing triacyl-sn-glycerol = an N-(34-(9Z,12Z-octadecadienoyloxy)-tetratriacontenoyl)-sphing-4-enine + a diacylglycerol. It carries out the reaction an N-(34-hydroxytetratriacontadienoyl)-sphing-4-enine + a (9Z,12Z)-octadecadienoyl-containing triacyl-sn-glycerol = an N-(34-(9Z,12Z-octadecadienoyloxy)-tetratriacontadienoyl)-sphing-4-enine + a diacylglycerol. It catalyses the reaction an N-(36-hydroxyhexatriacontenoyl)-sphing-4-enine + a (9Z,12Z)-octadecadienoyl-containing triacyl-sn-glycerol = an N-(36-(9Z,12Z-octadecadienoyloxy)-hexatriacontenoyl)-sphing-4-enine + a diacylglycerol. The catalysed reaction is an N-(36-hydroxyhexatriacontadienoyl)-sphing-4-enine + a (9Z,12Z)-octadecadienoyl-containing triacyl-sn-glycerol = an N-(36-(9Z,12Z-octadecadienoyloxy)-hexatriacontadienoyl)-sphing-4-enine + a diacylglycerol. The enzyme catalyses an N-(38-hydroxyoctatriacontenoyl)-sphing-4-enine + a (9Z,12Z)-octadecadienoyl-containing triacyl-sn-glycerol = an N-(38-(9Z,12Z-octadecadienoyloxy)-octatriacontenoyl)-sphing-4-enine + a diacylglycerol. Functionally, omega-hydroxyceramide transacylase involved in the synthesis of omega-O-acylceramides (esterified omega-hydroxyacyl-sphingosine; EOS), which are extremely hydrophobic lipids involved in skin barrier formation. Catalyzes the last step of the synthesis of omega-O-acylceramides by transferring linoleic acid from triglycerides to an omega-hydroxyceramide. Omega-O-acylceramides, are required for the biogenesis of lipid lamellae in the stratum corneum and the formation of the cornified lipid envelope which are essential for the epidermis barrier function. These lipids also play a role in keratinocyte differentiation. May also act on omega-hydroxylated ultra-long chain fatty acids (omega-OH ULCFA) and acylglucosylceramides (GlcEOS). In Homo sapiens (Human), this protein is Omega-hydroxyceramide transacylase.